Here is a 331-residue protein sequence, read N- to C-terminus: MAIPEFTMRQLLEAGVHFGHQSHRWNPKMAEYIFGARNNIHIIDLAQTVPLMHRALQAISDTVAKGGRVLFVGTKRQAQDAVADAAKRSAQYFVNSRWLGGTLTNWKTISGSIKRLRHLDDVLNSGDASAYTKKERLTLQRERDKLDRSLGGIKDMGGLPDLIFVIDTNKEDIAIQEAQRLGIPVAAIVDTNCDPKGITYLVPGNDDAGRAIALYCDLIARAVIDGISRAQGDSGIDIGAASRPLREDLPAAQATGFQGLSGPRGTPDDLKKLTGVSGDIEKKFNDLGIFHYWQFAELDHDTVLQIGEEVGLPGRADGWVAQAKGLTAEAE.

Belongs to the universal ribosomal protein uS2 family.

The protein is Small ribosomal subunit protein uS2 of Rhodopseudomonas palustris (strain BisB5).